Reading from the N-terminus, the 341-residue chain is MRVLGIESSCDETGVAVYDTDLAGSAALRAHAVYSQIALHAEYGGVVPELASRDHVRKLLPLVRQTLAEAGLGVGDIDGVAYTAGPGLVGALLVGAGVARSLAWALEVPAVGVHHMEGHLLAPLMEDDPPQAPFVALLVSGGHTQLVAVDAIGQYRLLGETLDDAAGEAFDKTAKMMGLPYPGGPQLARLAEQGTPGVYRFARPMIDRPGLDFSFSGLKTQVLMAWRDSDQSEQTRADIARGFEDAVVETLSIKCERALEAAGTNVIVVAGGVGANKRLRARLQQMAERLGGRACFPRPALCTDNGAMIAFAGALRLQAGQHSPPKVDVTPRWDMATLPAV.

Fe cation is bound by residues histidine 115 and histidine 119. Residues 138-142, aspartate 171, glycine 184, and asparagine 276 contribute to the substrate site; that span reads LVSGG. Aspartate 304 is a binding site for Fe cation.

The protein belongs to the KAE1 / TsaD family. Fe(2+) is required as a cofactor.

The protein localises to the cytoplasm. It catalyses the reaction L-threonylcarbamoyladenylate + adenosine(37) in tRNA = N(6)-L-threonylcarbamoyladenosine(37) in tRNA + AMP + H(+). Required for the formation of a threonylcarbamoyl group on adenosine at position 37 (t(6)A37) in tRNAs that read codons beginning with adenine. Is involved in the transfer of the threonylcarbamoyl moiety of threonylcarbamoyl-AMP (TC-AMP) to the N6 group of A37, together with TsaE and TsaB. TsaD likely plays a direct catalytic role in this reaction. This chain is tRNA N6-adenosine threonylcarbamoyltransferase, found in Stenotrophomonas maltophilia (strain R551-3).